A 678-amino-acid chain; its full sequence is Dol-P-Man:Man(7)GlcNAc(2)-PP-Dol alpha-1,6-mannosyltransferase (678 aa).

A run of 11 helical transmembrane segments spans residues 1 to 21 (MDILIFVTAAAHLVYTPFTKV), 56 to 76 (FIGPLVVSIISAPFVLLFETL), 81 to 101 (FWAQYVVRLVLAGAISVAWNS), 109 to 129 (IYGVEVRLWFTAITITQFHFM), 133 to 153 (TRPLPNIFALPIVLFAIAYWL), 168 to 188 (ILVFRSELALFLGILLVVSLL), 200 to 220 (VALPAGVCILAATVLVDSFFW), 252 to 272 (FYSALPRAMGASLVLVPIGVA), 279 to 299 (PLVLSALLFVLLYSILPHKEL), 301 to 321 (FIIYVFPVLNIAAACACQRIW), and 334 to 354 (ALACGAHLLLNVFITLFLLVI).

The protein belongs to the glycosyltransferase 22 family.

It is found in the endoplasmic reticulum membrane. It carries out the reaction an alpha-D-Man-(1-&gt;2)-alpha-D-Man-(1-&gt;2)-alpha-D-Man-(1-&gt;3)-[alpha-D-Man-(1-&gt;2)-alpha-D-Man-(1-&gt;3)-alpha-D-Man-(1-&gt;6)]-beta-D-Man-(1-&gt;4)-beta-D-GlcNAc-(1-&gt;4)-alpha-D-GlcNAc-diphospho-di-trans,poly-cis-dolichol + a di-trans,poly-cis-dolichyl beta-D-mannosyl phosphate = an alpha-D-Man-(1-&gt;2)-alpha-D-Man-(1-&gt;2)-alpha-D-Man-(1-&gt;3)-[alpha-D-Man-(1-&gt;2)-alpha-D-Man-(1-&gt;3)-[alpha-D-Man-(1-&gt;6)]-alpha-D-Man-(1-&gt;6)]-beta-D-Man-(1-&gt;4)-beta-D-GlcNAc-(1-&gt;4)-alpha-D-GlcNAc-diphospho-di-trans,poly-cis-dolichol + a di-trans,poly-cis-dolichyl phosphate + H(+). Its pathway is protein modification; protein glycosylation. Its function is as follows. Mannosyltransferase that operates in the biosynthetic pathway of dolichol-linked oligosaccharides, the glycan precursors employed in protein asparagine (N)-glycosylation. The assembly of dolichol-linked oligosaccharides begins on the cytosolic side of the endoplasmic reticulum membrane and finishes in its lumen. The sequential addition of sugars to dolichol pyrophosphate produces dolichol-linked oligosaccharides containing fourteen sugars, including two GlcNAcs, nine mannoses and three glucoses. Once assembled, the oligosaccharide is transferred from the lipid to nascent proteins by oligosaccharyltransferases. In the lumen of the endoplasmic reticulum, adds the eighth mannose residue in an alpha-1,6 linkage onto Man(7)GlcNAc(2)-PP-dolichol to produce Man(8)GlcNAc(2)-PP-dolichol. This is Dol-P-Man:Man(7)GlcNAc(2)-PP-Dol alpha-1,6-mannosyltransferase from Drosophila melanogaster (Fruit fly).